The chain runs to 300 residues: Metal tolerance protein 12 (300 aa).

The Cytoplasmic segment spans residues Met-1–Lys-26. The helical transmembrane segment at Ile-27 to Met-47 threads the bilayer. Topologically, residues Ser-48 to Ser-50 are vacuolar. Residues Leu-51–Leu-71 traverse the membrane as a helical segment. Topologically, residues Tyr-72–Arg-91 are cytoplasmic. The chain crosses the membrane as a helical span at residues Phe-92 to Val-112. Residues Leu-113–Asn-128 lie on the Vacuolar side of the membrane. A helical membrane pass occupies residues Ser-129–His-149. The Cytoplasmic segment spans residues Glu-150 to Gly-160. A helical membrane pass occupies residues Ile-161–Leu-181. At Ile-182 to Gly-186 the chain is on the vacuolar side. A helical transmembrane segment spans residues Trp-187–Ile-207. Over Pro-208–Ser-300 the chain is Cytoplasmic.

It belongs to the cation diffusion facilitator (CDF) transporter (TC 2.A.4) family. SLC30A subfamily.

It is found in the vacuole membrane. In terms of biological role, involved in sequestration of excess metal in the cytoplasm into vacuoles to maintain metal homeostasis. This Arabidopsis thaliana (Mouse-ear cress) protein is Metal tolerance protein 12 (MTP12).